A 47-amino-acid polypeptide reads, in one-letter code: Large ribosomal subunit protein bL34 (47 aa).

The protein belongs to the bacterial ribosomal protein bL34 family.

The chain is Large ribosomal subunit protein bL34 from Corynebacterium jeikeium (strain K411).